A 285-amino-acid chain; its full sequence is Inositol oxygenase (285 aa).

Residue Arg29 coordinates substrate. The residue at position 33 (Ser33) is a Phosphoserine. Residue 85–88 coordinates substrate; sequence DESD. 3 residues coordinate Fe cation: His98, His123, and Asp124. Substrate contacts are provided by residues Lys127 and 141 to 142; that span reads GD. Fe cation-binding residues include His194, His220, and Asp253. A substrate-binding site is contributed by 220 to 221; it reads HS.

The protein belongs to the myo-inositol oxygenase family. Fe cation is required as a cofactor. In terms of tissue distribution, kidney specific. Renal proximal tubules.

It is found in the cytoplasm. It carries out the reaction myo-inositol + O2 = D-glucuronate + H2O + H(+). It participates in polyol metabolism; myo-inositol degradation into D-glucuronate; D-glucuronate from myo-inositol: step 1/1. The chain is Inositol oxygenase (Miox) from Mus musculus (Mouse).